The following is a 519-amino-acid chain: Cytochrome P450 monooxygenase easM (519 aa).

A helical membrane pass occupies residues Val-16–Ser-33. N-linked (GlcNAc...) asparagine glycans are attached at residues Asn-50 and Asn-353. Heme is bound at residue Cys-458.

It belongs to the cytochrome P450 family. It depends on heme as a cofactor.

It localises to the membrane. It participates in alkaloid biosynthesis; ergot alkaloid biosynthesis. Functionally, cytochrome P450 monooxygenase; part of the gene cluster that mediates the biosynthesis of fumiclavanine C, a fungal ergot alkaloid. DmaW catalyzes the first step of ergot alkaloid biosynthesis by condensing dimethylallyl diphosphate (DMAP) and tryptophan to form 4-dimethylallyl-L-tryptophan. The second step is catalyzed by the methyltransferase easF that methylates 4-dimethylallyl-L-tryptophan in the presence of S-adenosyl-L-methionine, resulting in the formation of 4-dimethylallyl-L-abrine. The catalase easC and the FAD-dependent oxidoreductase easE then transform 4-dimethylallyl-L-abrine to chanoclavine-I which is further oxidized by EasD in the presence of NAD(+), resulting in the formation of chanoclavine-I aldehyde. EasA reduces chanoclavine-I aldehyde to dihydrochanoclavine-I aldehyde that spontaneously dehydrates to form 6,8-dimethyl-6,7-didehydroergoline. EasG then catalyzes the reduction of 6,8-dimethyl-6,7-didehydroergoline to form festuclavine. Hydrolysis of festuclavine by easM then leads to the formation of fumigaclavine B which is in turn acetylated by easN to fumigaclavine A. Finally, easL catalyzes the conversion of fumigaclavine A into fumigaclavine C by attaching a dimethylallyl moiety to C-2 of the indole nucleus. The chain is Cytochrome P450 monooxygenase easM from Aspergillus fumigatus (strain ATCC MYA-4609 / CBS 101355 / FGSC A1100 / Af293) (Neosartorya fumigata).